Here is a 168-residue protein sequence, read N- to C-terminus: MKRIISSSKSLKQLSNIGYGSKKQIHCKSVVDSDSDSDSDSDSDSDSDSNSNSNSNSNSNSNSNSNSNSNSNSNNNNNNTNNNNNNNNNNNNNNNNNNNNNNNNNNNNNSVFSELILKLIAERVILINNYNIEKIEEIKGIPELMKSITSTTAETKNNYYSGSYYSSR.

The segment covering 1 to 15 (MKRIISSSKSLKQLS) has biased composition (low complexity). Residues 1–107 (MKRIISSSKS…NNNNNNNNNN (107 aa)) form a disordered region. Positions 33-47 (SDSDSDSDSDSDSDS) are enriched in acidic residues. Residues 48–107 (DSNSNSNSNSNSNSNSNSNSNSNSNSNNNNNNTNNNNNNNNNNNNNNNNNNNNNNNNNNN) are compositionally biased toward low complexity.

This is an uncharacterized protein from Dictyostelium discoideum (Social amoeba).